Reading from the N-terminus, the 425-residue chain is Inositol hexakisphosphate kinase 2 (425 aa).

ATP-binding positions include 206–208 and aspartate 219; that span reads ENL. Substrate is bound by residues 215–223, lysine 221, and 235–242; these read PCVLDLKMG and KAANQIRK. Residue aspartate 382 participates in ATP binding. Residue histidine 385 coordinates substrate.

It belongs to the inositol phosphokinase (IPK) family. As to expression, detected in kidney, intestine, liver and heart.

The protein resides in the nucleus. The catalysed reaction is 1D-myo-inositol hexakisphosphate + ATP = 5-diphospho-1D-myo-inositol 1,2,3,4,6-pentakisphosphate + ADP. It functions in the pathway phospholipid metabolism; phosphatidylinositol metabolism. Converts inositol hexakisphosphate (InsP6) to diphosphoinositol pentakisphosphate (InsP7/PP-InsP5). The polypeptide is Inositol hexakisphosphate kinase 2 (IP6K2) (Oryctolagus cuniculus (Rabbit)).